The sequence spans 286 residues: Inositol polyphosphate multikinase alpha (286 aa).

The disordered stretch occupies residues 1-22 (MQLKVPEHQVAGHIAKDGKPGP).

This sequence belongs to the inositol phosphokinase (IPK) family. In terms of processing, phosphorylated. In terms of tissue distribution, detected in leaves, stems, roots, siliques and flowers. Highly expressed in root tissues, anthers, the stigma, pollen grains and growing pollen tubes.

The protein localises to the nucleus. The protein resides in the cell membrane. It catalyses the reaction 1D-myo-inositol 1,4,5-trisphosphate + 2 ATP = 1D-myo-inositol 1,3,4,5,6-pentakisphosphate + 2 ADP + 2 H(+). The catalysed reaction is 1D-myo-inositol 1,3,4,6-tetrakisphosphate + ATP = 1D-myo-inositol 1,3,4,5,6-pentakisphosphate + ADP + H(+). Its function is as follows. Inositol phosphate kinase with a broad substrate specificity. Phosphorylates inositol 1,4,5-trisphosphate (Ins(1,4,5)P3), inositol 1,4,5,6-tetrakisphosphate (Ins(1,4,5,6)P4), inositol 1,3,4,5-tetrakisphosphate (Ins(1,3,4,5)P4), inositol 1,3,4,6-tetrakisphosphate (Ins(1,3,4,6)P4) and inositol 1,2,3,4,6-pentakisphosphate (Ins(1,2,3,4,6)P5) but not inositol 1,4-bisphosphate (Ins(1,4)P2), inositol 1,3,4-trisphosphate (Ins(1,3,4)P3), inositol 1,2,6-trisphosphate (Ins(1,2,6)P3), inositol 3,4,5,6-tetrakisphosphate (Ins(3,4,5,6)P4), inositol 1,3,4,5,6-pentakisphosphate (Ins(1,3,4,5,6)P5), inositol 1,2,4,5,6-pentakisphosphate (Ins(1,2,4,5,6)P5) or inositol hexakisphosphate (InsP6). Regulates pollen and root development probably through the regulation of InsP3-mediated calcium accumulation. This is Inositol polyphosphate multikinase alpha (IPK2a) from Arabidopsis thaliana (Mouse-ear cress).